Reading from the N-terminus, the 179-residue chain is Large ribosomal subunit protein uL5 (179 aa).

This sequence belongs to the universal ribosomal protein uL5 family. Part of the 50S ribosomal subunit; part of the 5S rRNA/L5/L18/L25 subcomplex. Contacts the 5S rRNA and the P site tRNA. Forms a bridge to the 30S subunit in the 70S ribosome.

This is one of the proteins that bind and probably mediate the attachment of the 5S RNA into the large ribosomal subunit, where it forms part of the central protuberance. In the 70S ribosome it contacts protein S13 of the 30S subunit (bridge B1b), connecting the 2 subunits; this bridge is implicated in subunit movement. Contacts the P site tRNA; the 5S rRNA and some of its associated proteins might help stabilize positioning of ribosome-bound tRNAs. This is Large ribosomal subunit protein uL5 from Dictyoglomus turgidum (strain DSM 6724 / Z-1310).